Here is a 310-residue protein sequence, read N- to C-terminus: Olfactory receptor 2A14 (310 aa).

At M1–I24 the chain is on the extracellular side. N4 is a glycosylation site (N-linked (GlcNAc...) asparagine). A helical membrane pass occupies residues L25–I48. Topologically, residues C49–T56 are cytoplasmic. A helical membrane pass occupies residues P57 to P78. Residues K79–Q99 are Extracellular-facing. C96 and C188 form a disulfide bridge. The chain crosses the membrane as a helical span at residues T100–Y119. Topologically, residues D120 to R138 are cytoplasmic. Residues V139–V157 traverse the membrane as a helical segment. At P158 to N194 the chain is on the extracellular side. Residues Q195–L218 form a helical membrane-spanning segment. Residues R219–K235 are Cytoplasmic-facing. Residues A236 to Y258 form a helical membrane-spanning segment. Topologically, residues M259–K271 are extracellular. A helical transmembrane segment spans residues V272–L291. Topologically, residues R292–T310 are cytoplasmic.

It belongs to the G-protein coupled receptor 1 family.

The protein localises to the cell membrane. Functionally, odorant receptor. The sequence is that of Olfactory receptor 2A14 (OR2A14) from Homo sapiens (Human).